We begin with the raw amino-acid sequence, 512 residues long: Krueppel-like factor 11 (512 aa).

Residues 109-128 are disordered; sequence PQSPDLVEPSTRTPVSPQVT. The segment covering 118 to 128 has biased composition (polar residues); that stretch reads STRTPVSPQVT. Phosphoserine is present on Ser124. C2H2-type zinc fingers lie at residues 394 to 418, 424 to 448, and 454 to 476; these read YVCS…LRTH, FNCS…RRTH, and FVCP…ARRH.

This sequence belongs to the Sp1 C2H2-type zinc-finger protein family. As to quaternary structure, interacts with SIN3A. As to expression, ubiquitous. Higher expression in erythroid cells.

It localises to the nucleus. Transcription factor. Activates the epsilon- and gamma-globin gene promoters and, to a much lower degree, the beta-globin gene and represses promoters containing SP1-like binding inhibiting cell growth. Represses transcription of SMAD7 which enhances TGF-beta signaling. Induces apoptosis. This is Krueppel-like factor 11 (KLF11) from Homo sapiens (Human).